A 245-amino-acid polypeptide reads, in one-letter code: Carboxy-S-adenosyl-L-methionine synthase (245 aa).

S-adenosyl-L-methionine is bound by residues tyrosine 42, 67–69 (GCS), 92–93 (DN), 120–121 (DI), asparagine 135, and arginine 202.

This sequence belongs to the class I-like SAM-binding methyltransferase superfamily. Cx-SAM synthase family. In terms of assembly, homodimer.

It catalyses the reaction prephenate + S-adenosyl-L-methionine = carboxy-S-adenosyl-L-methionine + 3-phenylpyruvate + H2O. In terms of biological role, catalyzes the conversion of S-adenosyl-L-methionine (SAM) to carboxy-S-adenosyl-L-methionine (Cx-SAM). The sequence is that of Carboxy-S-adenosyl-L-methionine synthase from Vibrio parahaemolyticus serotype O3:K6 (strain RIMD 2210633).